The following is a 289-amino-acid chain: Probable porphobilinogen deaminase (289 aa).

Position 233 is an S-(dipyrrolylmethanemethyl)cysteine (Cys-233).

Belongs to the HMBS family. Dipyrromethane is required as a cofactor.

The enzyme catalyses 4 porphobilinogen + H2O = hydroxymethylbilane + 4 NH4(+). It participates in porphyrin-containing compound metabolism; protoporphyrin-IX biosynthesis; coproporphyrinogen-III from 5-aminolevulinate: step 2/4. Its function is as follows. Tetrapolymerization of the monopyrrole PBG into the hydroxymethylbilane pre-uroporphyrinogen in several discrete steps. This Methanothermobacter thermautotrophicus (strain ATCC 29096 / DSM 1053 / JCM 10044 / NBRC 100330 / Delta H) (Methanobacterium thermoautotrophicum) protein is Probable porphobilinogen deaminase (hemC).